Consider the following 649-residue polypeptide: V-type ATP synthase subunit I (649 aa).

Helical transmembrane passes span Phe312–Phe332, Phe360–Val380, Phe453–Gly473, Ile485–Val505, Gly520–Ile540, Val556–Val576, and Ile593–Ile613.

Belongs to the V-ATPase 116 kDa subunit family.

It is found in the cell membrane. In terms of biological role, produces ATP from ADP in the presence of a proton gradient across the membrane. This is V-type ATP synthase subunit I (atpI) from Chlamydia trachomatis serovar D (strain ATCC VR-885 / DSM 19411 / UW-3/Cx).